The following is a 658-amino-acid chain: Interferon-induced GTP-binding protein Mx1 (658 aa).

The residue at position 1 (M1) is an N-acetylmethionine. The disordered stretch occupies residues 1–20 (MVNSKGKITDSDPGSSHLLL). The Dynamin-type G domain maps to 65-338 (DLALPAIAVI…LITHICKTLP (274 aa)). Residues 75 to 82 (GDQSSGKS) are G1 motif. 75 to 82 (GDQSSGKS) is a binding site for GTP. The G2 motif stretch occupies residues 100–102 (VTR). Positions 176–179 (DLPG) are G3 motif. GTP contacts are provided by residues 176–180 (DLPGI) and 245–248 (TKPD). A G4 motif region spans residues 245-248 (TKPD). Positions 277–280 (KCRG) are G5 motif. Positions 339-364 (LLENQIKENYEKITEELQKYGSDVPE) are bundle signaling element (BSE). The segment at 364–531 (EEEHEKMFFL…HFQMEQIVYC (168 aa)) is middle domain. The stalk stretch occupies residues 365 to 628 (EEHEKMFFLI…KDTHNWLLKE (264 aa)). Positions 551 to 554 (KDRK) are critical for lipid-binding. Residues 570 to 658 (LSDIFEHLLA…ARRRLAKFPG (89 aa)) enclose the GED domain.

The protein belongs to the TRAFAC class dynamin-like GTPase superfamily. Dynamin/Fzo/YdjA family. In terms of assembly, homooligomer. Oligomerizes into multimeric filamentous or ring-like structures by virtue of its stalk domain. Oligomerization is critical for GTPase activity, protein stability, and recognition of viral target structures. Interacts with TRPC1, TRPC3, TRPC4, TRPC5, TRPC6 and TRPC7. Interacts with HSPA5. Interacts with TUBB/TUBB5. Interacts with DDX39A and DDX39B. Post-translationally, ISGylated.

It is found in the cytoplasm. It localises to the endoplasmic reticulum membrane. The protein localises to the perinuclear region. Interferon-induced dynamin-like GTPase with antiviral activity. The chain is Interferon-induced GTP-binding protein Mx1 (MX1) from Eumetopias jubatus (Steller sea lion).